We begin with the raw amino-acid sequence, 193 residues long: ATP-dependent Clp protease proteolytic subunit (193 aa).

Ser98 (nucleophile) is an active-site residue. The active site involves His123.

This sequence belongs to the peptidase S14 family. In terms of assembly, fourteen ClpP subunits assemble into 2 heptameric rings which stack back to back to give a disk-like structure with a central cavity, resembling the structure of eukaryotic proteasomes.

It localises to the cytoplasm. It carries out the reaction Hydrolysis of proteins to small peptides in the presence of ATP and magnesium. alpha-casein is the usual test substrate. In the absence of ATP, only oligopeptides shorter than five residues are hydrolyzed (such as succinyl-Leu-Tyr-|-NHMec, and Leu-Tyr-Leu-|-Tyr-Trp, in which cleavage of the -Tyr-|-Leu- and -Tyr-|-Trp bonds also occurs).. Its function is as follows. Cleaves peptides in various proteins in a process that requires ATP hydrolysis. Has a chymotrypsin-like activity. Plays a major role in the degradation of misfolded proteins. This chain is ATP-dependent Clp protease proteolytic subunit, found in Mannheimia succiniciproducens (strain KCTC 0769BP / MBEL55E).